The sequence spans 316 residues: MAAPEAPPLDRVFRTTWLSTECDSHPLPPSYRKFLFETQAADLAGGTTVAAGNLLNESEKDCGQDRRAPGVQPCRLVTMTSVVKTVYSLQPPSALSGGQPADTQTRATSKSLLPVRSKEVDVSKQLHSGGPENDVTKITKLRRENGQMKATDTATRRNVRKGYKPLSKQKSEEELKDKNQLLEAVNKQLHQKLTETQGELKDLTQKVELLEKFRDNCLAILESKGLDPALGSETLASRQESTTDHMDSMLLLETLQEELKLFNETAKKQMEELQALKVKLEMKEERVRFLEQQTLCNNQVNDLTTALKEMEQLLEM.

The residue at position 128 (S128) is a Phosphoserine. The tract at residues 159–316 (VRKGYKPLSK…LKEMEQLLEM (158 aa)) is interaction with SPAG5. Coiled coils occupy residues 166–216 (LSKQ…FRDN) and 248–316 (SMLL…LLEM).

In terms of assembly, part of an astrin (SPAG5)-kinastrin (SKAP) complex containing KNSTRN, SPAG5, PLK1, DYNLL1 and SGO2. Interacts with SPAG5. Directly binds to microtubules, although at relatively low affinity. Interacts with CENPE; this interaction greatly favors microtubule-binding. Interacts with DSN1/MIS13; leading to localization to kinetochores. Interacts with MAPRE1/EB1; leading to localization to the microtubule plus ends. Interacts with PRPF19. Interacts with DYNLL1. Interacts with MAP4. Widely expressed, including in skin.

It is found in the nucleus. Its subcellular location is the chromosome. It localises to the centromere. The protein localises to the kinetochore. The protein resides in the cytoplasm. It is found in the cytoskeleton. Its subcellular location is the spindle pole. It localises to the microtubule organizing center. Its function is as follows. Essential component of the mitotic spindle required for faithful chromosome segregation and progression into anaphase. Promotes the metaphase-to-anaphase transition and is required for chromosome alignment, normal timing of sister chromatid segregation, and maintenance of spindle pole architecture. The astrin (SPAG5)-kinastrin (SKAP) complex promotes stable microtubule-kinetochore attachments. Required for kinetochore oscillations and dynamics of microtubule plus-ends during live cell mitosis, possibly by forming a link between spindle microtubule plus-ends and mitotic chromosomes to achieve faithful cell division. May be involved in UV-induced apoptosis via its interaction with PRPF19; however, these results need additional evidences. This is Small kinetochore-associated protein from Homo sapiens (Human).